Consider the following 152-residue polypeptide: UPF0178 protein YPTS_2857 (152 aa).

It belongs to the UPF0178 family.

The sequence is that of UPF0178 protein YPTS_2857 from Yersinia pseudotuberculosis serotype IB (strain PB1/+).